The chain runs to 658 residues: NADH-ubiquinone oxidoreductase chain 5 (658 aa).

The next 17 membrane-spanning stretches (helical) occupy residues 4 to 23, 30 to 52, 81 to 103, 112 to 129, 133 to 155, 168 to 190, 200 to 222, 243 to 262, 272 to 294, 301 to 319, 329 to 351, 364 to 386, 409 to 431, 452 to 471, 505 to 527, 607 to 629, and 639 to 656; these read TLIV…GRKI, IITC…EVGI, LTVS…SISY, RFFS…ILVT, YLLM…NFWF, LLTN…WSFG, LAPY…GATA, VSAL…LLMR, TVLI…IGLF, VIAY…GIGL, LVNH…HSVA, PFLP…VPFM, IVYF…VLYL, LFLN…FGFL, VPVL…SILY, LSTG…YIST, and LLIL…NKLL.

Belongs to the complex I subunit 5 family.

It is found in the mitochondrion inner membrane. The enzyme catalyses a ubiquinone + NADH + 5 H(+)(in) = a ubiquinol + NAD(+) + 4 H(+)(out). Its function is as follows. Core subunit of the mitochondrial membrane respiratory chain NADH dehydrogenase (Complex I) that is believed to belong to the minimal assembly required for catalysis. Complex I functions in the transfer of electrons from NADH to the respiratory chain. The immediate electron acceptor for the enzyme is believed to be ubiquinone. This chain is NADH-ubiquinone oxidoreductase chain 5 (nad5), found in Talaromyces marneffei (Penicillium marneffei).